We begin with the raw amino-acid sequence, 247 residues long: Mitochondrial inner membrane protease ATP23 (247 aa).

A disordered region spans residues 1-21 (MSVPPPPKEDLIKPNPPKSES). His144 contributes to the a divalent metal cation binding site. Residue Glu145 is part of the active site. His148 serves as a coordination point for a divalent metal cation.

The protein belongs to the peptidase M76 family.

It is found in the mitochondrion inner membrane. Its function is as follows. Has a dual role in the assembly of mitochondrial ATPase. Acts as a protease that removes N-terminal residues of mitochondrial ATPase CF(0) subunit 6 at the intermembrane space side. Also involved in the correct assembly of the membrane-embedded ATPase CF(0) particle, probably mediating association of subunit 6 with the subunit 9 ring. The sequence is that of Mitochondrial inner membrane protease ATP23 (ATP23) from Kluyveromyces lactis (strain ATCC 8585 / CBS 2359 / DSM 70799 / NBRC 1267 / NRRL Y-1140 / WM37) (Yeast).